Here is a 412-residue protein sequence, read N- to C-terminus: Putative competence-damage inducible protein (412 aa).

It belongs to the CinA family.

The chain is Putative competence-damage inducible protein from Clostridium perfringens (strain ATCC 13124 / DSM 756 / JCM 1290 / NCIMB 6125 / NCTC 8237 / Type A).